A 66-amino-acid polypeptide reads, in one-letter code: Clarkitoxin-I-Mdum (66 aa).

Disulfide bonds link Cys-3/Cys-24, Cys-17/Cys-42, Cys-46/Cys-59, and Cys-60/Cys-65.

Expressed by the venom gland.

It localises to the secreted. Its function is as follows. No toxicity is observed upon intravenous or intracerebroventricular injection into mice. Has no cytotoxic activity towards C2C12 cells at 100 ug/ml. The sequence is that of Clarkitoxin-I-Mdum from Micrurus dumerilii (Coral snake).